The sequence spans 184 residues: Elongation factor P (184 aa).

This sequence belongs to the elongation factor P family.

The protein localises to the cytoplasm. Its pathway is protein biosynthesis; polypeptide chain elongation. Functionally, involved in peptide bond synthesis. Stimulates efficient translation and peptide-bond synthesis on native or reconstituted 70S ribosomes in vitro. Probably functions indirectly by altering the affinity of the ribosome for aminoacyl-tRNA, thus increasing their reactivity as acceptors for peptidyl transferase. The polypeptide is Elongation factor P (Delftia acidovorans (strain DSM 14801 / SPH-1)).